A 150-amino-acid polypeptide reads, in one-letter code: D-aminoacyl-tRNA deacylase (150 aa).

Positions 133–134 (GP) match the Gly-cisPro motif, important for rejection of L-amino acids motif.

The protein belongs to the DTD family. Homodimer.

It localises to the cytoplasm. It carries out the reaction glycyl-tRNA(Ala) + H2O = tRNA(Ala) + glycine + H(+). It catalyses the reaction a D-aminoacyl-tRNA + H2O = a tRNA + a D-alpha-amino acid + H(+). In terms of biological role, an aminoacyl-tRNA editing enzyme that deacylates mischarged D-aminoacyl-tRNAs. Also deacylates mischarged glycyl-tRNA(Ala), protecting cells against glycine mischarging by AlaRS. Acts via tRNA-based rather than protein-based catalysis; rejects L-amino acids rather than detecting D-amino acids in the active site. By recycling D-aminoacyl-tRNA to D-amino acids and free tRNA molecules, this enzyme counteracts the toxicity associated with the formation of D-aminoacyl-tRNA entities in vivo and helps enforce protein L-homochirality. In Kocuria rhizophila (strain ATCC 9341 / DSM 348 / NBRC 103217 / DC2201), this protein is D-aminoacyl-tRNA deacylase.